An 86-amino-acid chain; its full sequence is Cell division topological specificity factor (86 aa).

This sequence belongs to the MinE family.

Its function is as follows. Prevents the cell division inhibition by proteins MinC and MinD at internal division sites while permitting inhibition at polar sites. This ensures cell division at the proper site by restricting the formation of a division septum at the midpoint of the long axis of the cell. The chain is Cell division topological specificity factor from Shewanella woodyi (strain ATCC 51908 / MS32).